A 251-amino-acid chain; its full sequence is Hydroxyacylglutathione hydrolase (251 aa).

Positions 53, 55, 57, 58, 110, 127, and 165 each coordinate Zn(2+).

The protein belongs to the metallo-beta-lactamase superfamily. Glyoxalase II family. In terms of assembly, monomer. Zn(2+) is required as a cofactor.

The catalysed reaction is an S-(2-hydroxyacyl)glutathione + H2O = a 2-hydroxy carboxylate + glutathione + H(+). It functions in the pathway secondary metabolite metabolism; methylglyoxal degradation; (R)-lactate from methylglyoxal: step 2/2. In terms of biological role, thiolesterase that catalyzes the hydrolysis of S-D-lactoyl-glutathione to form glutathione and D-lactic acid. In Escherichia coli (strain UTI89 / UPEC), this protein is Hydroxyacylglutathione hydrolase.